The chain runs to 538 residues: Phosphoenolpyruvate carboxykinase (ATP) (538 aa).

Arg-64, Tyr-205, and Lys-211 together coordinate substrate. ATP-binding positions include Lys-211, His-230, and Gly-246–Thr-254. Positions 211 and 230 each coordinate Mn(2+). Mn(2+) is bound at residue Asp-267. ATP-binding positions include Glu-295, Arg-331, Arg-447–Ile-448, and Thr-453. A substrate-binding site is contributed by Arg-331.

Belongs to the phosphoenolpyruvate carboxykinase (ATP) family. As to quaternary structure, monomer. Requires Mn(2+) as cofactor.

Its subcellular location is the cytoplasm. It carries out the reaction oxaloacetate + ATP = phosphoenolpyruvate + ADP + CO2. The protein operates within carbohydrate biosynthesis; gluconeogenesis. Functionally, involved in the gluconeogenesis. Catalyzes the conversion of oxaloacetate (OAA) to phosphoenolpyruvate (PEP) through direct phosphoryl transfer between the nucleoside triphosphate and OAA. The protein is Phosphoenolpyruvate carboxykinase (ATP) of Mannheimia succiniciproducens (strain KCTC 0769BP / MBEL55E).